We begin with the raw amino-acid sequence, 542 residues long: CTP synthase (542 aa).

The tract at residues 1-265 (MTRYIFVTGG…DEIIVERFGL (265 aa)) is amidoligase domain. Serine 13 lines the CTP pocket. Serine 13 serves as a coordination point for UTP. ATP is bound by residues 14 to 19 (SLGKGI) and aspartate 71. The Mg(2+) site is built by aspartate 71 and glutamate 139. CTP is bound by residues 146–148 (DIE), 186–191 (KTKPTQ), and lysine 222. UTP contacts are provided by residues 186-191 (KTKPTQ) and lysine 222. The Glutamine amidotransferase type-1 domain maps to 290 to 541 (TIAMVGKYME…VRAALENAGG (252 aa)). An L-glutamine-binding site is contributed by glycine 351. Cysteine 378 functions as the Nucleophile; for glutamine hydrolysis in the catalytic mechanism. L-glutamine-binding positions include 379-382 (LGLQ), glutamate 402, and arginine 469. Residues histidine 514 and glutamate 516 contribute to the active site.

This sequence belongs to the CTP synthase family. Homotetramer.

It carries out the reaction UTP + L-glutamine + ATP + H2O = CTP + L-glutamate + ADP + phosphate + 2 H(+). It catalyses the reaction L-glutamine + H2O = L-glutamate + NH4(+). The enzyme catalyses UTP + NH4(+) + ATP = CTP + ADP + phosphate + 2 H(+). It participates in pyrimidine metabolism; CTP biosynthesis via de novo pathway; CTP from UDP: step 2/2. Its activity is regulated as follows. Allosterically activated by GTP, when glutamine is the substrate; GTP has no effect on the reaction when ammonia is the substrate. The allosteric effector GTP functions by stabilizing the protein conformation that binds the tetrahedral intermediate(s) formed during glutamine hydrolysis. Inhibited by the product CTP, via allosteric rather than competitive inhibition. In terms of biological role, catalyzes the ATP-dependent amination of UTP to CTP with either L-glutamine or ammonia as the source of nitrogen. Regulates intracellular CTP levels through interactions with the four ribonucleotide triphosphates. In Hahella chejuensis (strain KCTC 2396), this protein is CTP synthase.